Here is a 264-residue protein sequence, read N- to C-terminus: MKQYLELMQKVLDEGTQKNDRTGTGTLSIFGHQMRFNLQEGFPLVTTKHCHLRSIIHELLWFLQGDTNIAYLHENNVTIWDEWADENGDLGPVYGKQWRAWPTPDGRHIDQIATVLSQLKNDPDSRRIIVSAWNVGELDKMALAPCHAFFQFYVADGKLSCQLYQRSCDVFLGLPFNIASYALLVHMMAQQCDLDVGDFVWTGGDTHLYSNHMEQTHLQLSREPRALPKLVIKRKPDSLFDYRFDDFEIEGYDPHPGIKAPVAI.

Arg21 is a dUMP binding site. (6R)-5,10-methylene-5,6,7,8-tetrahydrofolate is bound at residue His51. 126 to 127 (RR) provides a ligand contact to dUMP. Cys146 acts as the Nucleophile in catalysis. DUMP contacts are provided by residues 166–169 (RSCD), Asn177, and 207–209 (HLY). Position 169 (Asp169) interacts with (6R)-5,10-methylene-5,6,7,8-tetrahydrofolate. Position 263 (Ala263) interacts with (6R)-5,10-methylene-5,6,7,8-tetrahydrofolate.

The protein belongs to the thymidylate synthase family. Bacterial-type ThyA subfamily. As to quaternary structure, homodimer.

Its subcellular location is the cytoplasm. The enzyme catalyses dUMP + (6R)-5,10-methylene-5,6,7,8-tetrahydrofolate = 7,8-dihydrofolate + dTMP. The protein operates within pyrimidine metabolism; dTTP biosynthesis. Its function is as follows. Catalyzes the reductive methylation of 2'-deoxyuridine-5'-monophosphate (dUMP) to 2'-deoxythymidine-5'-monophosphate (dTMP) while utilizing 5,10-methylenetetrahydrofolate (mTHF) as the methyl donor and reductant in the reaction, yielding dihydrofolate (DHF) as a by-product. This enzymatic reaction provides an intracellular de novo source of dTMP, an essential precursor for DNA biosynthesis. The protein is Thymidylate synthase of Salmonella paratyphi C (strain RKS4594).